Reading from the N-terminus, the 284-residue chain is Protein Ku (284 aa).

In terms of domain architecture, Ku spans 10 to 189 (TIGLVTVPVK…ELRSTEGIVP (180 aa)).

In terms of assembly, homodimer. Interacts with host LigD.

Functionally, required for replication of viruses with short cos ends (4 bases). Stimulates dsDNA end-joining by host LigD. Binds dsDNA with either blunt, 5'- or 3-overhangs, protecting it from host exonuclease degradation. The polypeptide is Protein Ku (87) (Mycobacterium phage Corndog (Mycobacteriophage Corndog)).